The primary structure comprises 407 residues: MQKKDVKKVVLAYSGGLDTSIILKWLQDEYKCEVVTFTADIGQGEEVEPARKKAISLGIKPENIFIEDLREEFVKDFVFPMFRANAIYEGEYLLGTSIARPLIAKRLVEIAAATKADCVSHGATGKGNDQVRFEIGAYALNPNIKVIAPWREWDLNSREKLLAYAEKNGIDISKKKGKSPYSMDANLLHISYEGLVLEDPNHAPEEDMWRWSVSPKNAPDESDIIEIEYKNGDPVAINAKSMKPHEILTELNRLGAKHGIGRLDIVENRYVGMKSRGCYETPGGTIMLKAHRAIESITMDREAAHLKDELMPKYASLVYNGYWFSPERKMLQAAIDESQKNVNGTVRVELYKGNVMVIGRDSKTDNLFNEAYCTFEEDSVYDQKDANGFIKLNALRFIIAGKNGRKF.

ATP contacts are provided by residues 12 to 20 (AYSGGLDTS) and alanine 39. The L-citrulline site is built by tyrosine 92 and serine 97. Position 122 (glycine 122) interacts with ATP. Threonine 124, asparagine 128, and aspartate 129 together coordinate L-aspartate. Asparagine 128 lines the L-citrulline pocket. The L-citrulline site is built by arginine 132, serine 182, serine 191, glutamate 267, and tyrosine 279.

It belongs to the argininosuccinate synthase family. Type 1 subfamily. As to quaternary structure, homotetramer.

The protein resides in the cytoplasm. It carries out the reaction L-citrulline + L-aspartate + ATP = 2-(N(omega)-L-arginino)succinate + AMP + diphosphate + H(+). The protein operates within amino-acid biosynthesis; L-arginine biosynthesis; L-arginine from L-ornithine and carbamoyl phosphate: step 2/3. This chain is Argininosuccinate synthase, found in Campylobacter fetus subsp. fetus (strain 82-40).